We begin with the raw amino-acid sequence, 102 residues long: AKVEVGDEVGNFKFYPDSITVSAGEAVEFTLVGETGHNIVFDIPAGAPGTVASELKAASMDENDLLSEDEPSFKAKVSTPGTYTFYCTPHKSANMKGTLTVK.

The Plastocyanin-like domain maps to 1-102; sequence AKVEVGDEVG…ANMKGTLTVK (102 aa). Residues histidine 37, cysteine 87, histidine 90, and methionine 95 each coordinate Cu cation.

It belongs to the plastocyanin family. The cofactor is Cu(2+).

It localises to the plastid. The protein localises to the chloroplast thylakoid membrane. Its function is as follows. Participates in electron transfer between P700 and the cytochrome b6-f complex in photosystem I. This chain is Plastocyanin (PETE), found in Dryopteris crassirhizoma (Thick stemmed wood fern).